A 465-amino-acid chain; its full sequence is Cysteine--tRNA ligase (465 aa).

Cys28 provides a ligand contact to Zn(2+). The short motif at 30–40 (PTVYNYIHVGN) is the 'HIGH' region element. Residues Cys208, His233, and Glu237 each coordinate Zn(2+). The 'KMSKS' region motif lies at 265 to 269 (KMSKS). Lys268 is a binding site for ATP.

Belongs to the class-I aminoacyl-tRNA synthetase family. As to quaternary structure, monomer. Requires Zn(2+) as cofactor.

It is found in the cytoplasm. The enzyme catalyses tRNA(Cys) + L-cysteine + ATP = L-cysteinyl-tRNA(Cys) + AMP + diphosphate. The protein is Cysteine--tRNA ligase of Exiguobacterium sp. (strain ATCC BAA-1283 / AT1b).